Here is a 288-residue protein sequence, read N- to C-terminus: Ribosomal protein L11 methyltransferase (288 aa).

S-adenosyl-L-methionine-binding residues include T141, G164, D186, and N227.

The protein belongs to the methyltransferase superfamily. PrmA family.

It localises to the cytoplasm. The enzyme catalyses L-lysyl-[protein] + 3 S-adenosyl-L-methionine = N(6),N(6),N(6)-trimethyl-L-lysyl-[protein] + 3 S-adenosyl-L-homocysteine + 3 H(+). In terms of biological role, methylates ribosomal protein L11. This is Ribosomal protein L11 methyltransferase from Myxococcus xanthus (strain DK1622).